A 500-amino-acid chain; its full sequence is Cytochrome P450 2D4 (500 aa).

Cys446 contacts heme.

This sequence belongs to the cytochrome P450 family. The cofactor is heme. In terms of tissue distribution, brain.

It is found in the endoplasmic reticulum membrane. The protein resides in the microsome membrane. It carries out the reaction an organic molecule + reduced [NADPH--hemoprotein reductase] + O2 = an alcohol + oxidized [NADPH--hemoprotein reductase] + H2O + H(+). In terms of biological role, cytochromes P450 are a group of heme-thiolate monooxygenases. In liver microsomes, this enzyme is involved in an NADPH-dependent electron transport pathway. It oxidizes a variety of structurally unrelated compounds, including steroids, fatty acids, and xenobiotics. The polypeptide is Cytochrome P450 2D4 (Cyp2d4) (Rattus norvegicus (Rat)).